The chain runs to 176 residues: Lipoprotein signal peptidase (176 aa).

4 helical membrane-spanning segments follow: residues 26 to 46 (LWLA…IVIV), 57 to 77 (VTGF…SFLA), 82 to 102 (WQRW…VWLL), and 111 to 131 (FCFA…DRVI). Residues Asp137 and Asp155 contribute to the active site. The helical transmembrane segment at 147–167 (HWPAFNVADCAITVGAVLLIV) threads the bilayer.

This sequence belongs to the peptidase A8 family.

The protein localises to the cell inner membrane. The enzyme catalyses Release of signal peptides from bacterial membrane prolipoproteins. Hydrolyzes -Xaa-Yaa-Zaa-|-(S,diacylglyceryl)Cys-, in which Xaa is hydrophobic (preferably Leu), and Yaa (Ala or Ser) and Zaa (Gly or Ala) have small, neutral side chains.. It participates in protein modification; lipoprotein biosynthesis (signal peptide cleavage). This protein specifically catalyzes the removal of signal peptides from prolipoproteins. The polypeptide is Lipoprotein signal peptidase (Cupriavidus taiwanensis (strain DSM 17343 / BCRC 17206 / CCUG 44338 / CIP 107171 / LMG 19424 / R1) (Ralstonia taiwanensis (strain LMG 19424))).